Reading from the N-terminus, the 347-residue chain is tRNA pseudouridine synthase D (347 aa).

Asp-81 (nucleophile) is an active-site residue. The TRUD domain occupies 158 to 304 (GVPNYFGNQR…MRHDRRAIAL (147 aa)).

This sequence belongs to the pseudouridine synthase TruD family.

The catalysed reaction is uridine(13) in tRNA = pseudouridine(13) in tRNA. In terms of biological role, responsible for synthesis of pseudouridine from uracil-13 in transfer RNAs. This Vibrio vulnificus (strain CMCP6) protein is tRNA pseudouridine synthase D.